Here is a 275-residue protein sequence, read N- to C-terminus: 4-diphosphocytidyl-2-C-methyl-D-erythritol kinase (275 aa).

The active site involves K8. 86–96 (PEGAGLGGGSS) contributes to the ATP binding site. Residue D125 is part of the active site.

It belongs to the GHMP kinase family. IspE subfamily.

The enzyme catalyses 4-CDP-2-C-methyl-D-erythritol + ATP = 4-CDP-2-C-methyl-D-erythritol 2-phosphate + ADP + H(+). It functions in the pathway isoprenoid biosynthesis; isopentenyl diphosphate biosynthesis via DXP pathway; isopentenyl diphosphate from 1-deoxy-D-xylulose 5-phosphate: step 3/6. Functionally, catalyzes the phosphorylation of the position 2 hydroxy group of 4-diphosphocytidyl-2C-methyl-D-erythritol. The sequence is that of 4-diphosphocytidyl-2-C-methyl-D-erythritol kinase from Thermus thermophilus (strain ATCC BAA-163 / DSM 7039 / HB27).